We begin with the raw amino-acid sequence, 111 residues long: Colipase (111 aa).

Positions 1-16 (MKVLVLLLVTLAVVYA) are cleaved as a signal peptide. Positions 17–21 (APDPR) are cleaved as a propeptide — enterostatin, activation peptide. 5 cysteine pairs are disulfide-bonded: Cys-33–Cys-44, Cys-39–Cys-55, Cys-43–Cys-77, Cys-65–Cys-85, and Cys-79–Cys-103.

The protein belongs to the colipase family. Forms a 1:1 stoichiometric complex with pancreatic lipase. As to expression, expressed by the pancreas.

The protein resides in the secreted. Its function is as follows. Colipase is a cofactor of pancreatic lipase. It allows the lipase to anchor itself to the lipid-water interface. Without colipase the enzyme is washed off by bile salts, which have an inhibitory effect on the lipase. Functionally, enterostatin has a biological activity as a satiety signal. This is Colipase (CLPS) from Ictidomys tridecemlineatus (Thirteen-lined ground squirrel).